The primary structure comprises 398 residues: Bifunctional enzyme IspD/IspF (398 aa).

Residues 1 to 234 (MTNSPRTAAI…SRLMAALGDI (234 aa)) are 2-C-methyl-D-erythritol 4-phosphate cytidylyltransferase. The segment at 235-398 (RTGTGYDVHA…LPWGADGLAG (164 aa)) is 2-C-methyl-D-erythritol 2,4-cyclodiphosphate synthase. Positions 241 and 243 each coordinate a divalent metal cation. 4-CDP-2-C-methyl-D-erythritol 2-phosphate is bound by residues 241–243 (DVH) and 267–268 (HS). Histidine 275 is an a divalent metal cation binding site. Residues 289-291 (DIG), 365-368 (TTSE), phenylalanine 372, and arginine 375 contribute to the 4-CDP-2-C-methyl-D-erythritol 2-phosphate site.

It in the N-terminal section; belongs to the IspD/TarI cytidylyltransferase family. IspD subfamily. This sequence in the C-terminal section; belongs to the IspF family. A divalent metal cation serves as cofactor.

It carries out the reaction 2-C-methyl-D-erythritol 4-phosphate + CTP + H(+) = 4-CDP-2-C-methyl-D-erythritol + diphosphate. The enzyme catalyses 4-CDP-2-C-methyl-D-erythritol 2-phosphate = 2-C-methyl-D-erythritol 2,4-cyclic diphosphate + CMP. The protein operates within isoprenoid biosynthesis; isopentenyl diphosphate biosynthesis via DXP pathway; isopentenyl diphosphate from 1-deoxy-D-xylulose 5-phosphate: step 2/6. It functions in the pathway isoprenoid biosynthesis; isopentenyl diphosphate biosynthesis via DXP pathway; isopentenyl diphosphate from 1-deoxy-D-xylulose 5-phosphate: step 4/6. In terms of biological role, bifunctional enzyme that catalyzes the formation of 4-diphosphocytidyl-2-C-methyl-D-erythritol from CTP and 2-C-methyl-D-erythritol 4-phosphate (MEP) (IspD), and catalyzes the conversion of 4-diphosphocytidyl-2-C-methyl-D-erythritol 2-phosphate (CDP-ME2P) to 2-C-methyl-D-erythritol 2,4-cyclodiphosphate (ME-CPP) with a corresponding release of cytidine 5-monophosphate (CMP) (IspF). The sequence is that of Bifunctional enzyme IspD/IspF from Rhodopseudomonas palustris (strain TIE-1).